The sequence spans 495 residues: Anaerobic nitric oxide reductase flavorubredoxin (495 aa).

The zinc metallo-hydrolase stretch occupies residues 30–210 (HKGTSYNSYL…PFSPLVTAKI (181 aa)). Fe cation is bound by residues histidine 79, glutamate 81, aspartate 83, histidine 147, aspartate 166, and histidine 227. One can recognise a Flavodoxin-like domain in the interval 254–393 (ITLFYDSMSN…ECREHGRQLA (140 aa)). FMN-binding positions include 260 to 264 (SMSNN) and 342 to 369 (AFGS…DISI). A Rubredoxin-like domain is found at 438–489 (DQAMLCTVCQWVYDPAQGEPDQLVAPGTPWAQVPDSFLCPGCGIGKEVFEPC). Fe cation-binding residues include cysteine 443, cysteine 446, cysteine 476, and cysteine 479.

The protein in the N-terminal section; belongs to the zinc metallo-hydrolase group 3 family. As to quaternary structure, homotetramer. Fe cation serves as cofactor. It depends on FMN as a cofactor.

The protein localises to the cytoplasm. Its pathway is nitrogen metabolism; nitric oxide reduction. Functionally, anaerobic nitric oxide reductase; uses NADH to detoxify nitric oxide (NO), protecting several 4Fe-4S NO-sensitive enzymes. Has at least 2 reductase partners, only one of which (NorW, flavorubredoxin reductase) has been identified. NO probably binds to the di-iron center; electrons enter from the NorW at rubredoxin and are transferred sequentially to the FMN center and the di-iron center. Also able to function as an aerobic oxygen reductase. In Aeromonas hydrophila subsp. hydrophila (strain ATCC 7966 / DSM 30187 / BCRC 13018 / CCUG 14551 / JCM 1027 / KCTC 2358 / NCIMB 9240 / NCTC 8049), this protein is Anaerobic nitric oxide reductase flavorubredoxin.